A 78-amino-acid chain; its full sequence is Small ribosomal subunit protein bS20 (78 aa).

Positions 55-78 (KSKGLIHKNKASRDKARLASKLAK) are disordered.

The protein belongs to the bacterial ribosomal protein bS20 family.

Functionally, binds directly to 16S ribosomal RNA. The chain is Small ribosomal subunit protein bS20 from Streptococcus mutans serotype c (strain ATCC 700610 / UA159).